A 224-amino-acid polypeptide reads, in one-letter code: MNTPLPPQSLDELLRRAKMMAGLSLGQLAAGLGWPVPANLKRDKGWIGQLIEQELGATAGSRPEQDFLHLGVELKTIPIDRSGKPLETTYVCVAPLMDTHGLRWEQSLVKHKLERVLWVPVEGERDIPVADRRIGTAILWQPTPQQSASLRQDWEEIMEFIALGKVHRLSARHGEVLQLRPKAANAAAKTECIMEDGTVGLTNPRGFYLKIPFTQAILRQAFDY.

This sequence belongs to the MutH family.

Its subcellular location is the cytoplasm. Its function is as follows. Sequence-specific endonuclease that cleaves unmethylated GATC sequences. It is involved in DNA mismatch repair. The chain is DNA mismatch repair protein MutH from Shewanella amazonensis (strain ATCC BAA-1098 / SB2B).